Reading from the N-terminus, the 508-residue chain is Protein phosphatase PP2A regulatory subunit B (508 aa).

WD repeat units lie at residues 19 to 58, 81 to 122, 166 to 204, 215 to 255, 274 to 312, and 329 to 370; these read TEAD…KKQS, EIEE…IKLV, AHAY…QSFN, ELTE…LCDS, EITS…KPIK, and ENDA…GNDD. The interval 369 to 466 is disordered; it reads DDKPKFKSAF…MRRRMTSGVG (98 aa). Positions 396–418 are enriched in acidic residues; the sequence is DDDDDDDDDDDDEEADDEFDEEV. The segment covering 447-461 has biased composition (basic residues); the sequence is FKSKKSGQHPMRRRM. A WD 7 repeat occupies 477–507; that stretch reads DFKKSILHLSWHPRENSVAIAATNNLYIFST.

It belongs to the phosphatase 2A regulatory subunit B family. PP2A exists in several trimeric forms, all of which consist of a core composed of a catalytic subunit associated with a 65 kDa (PR65) (Subunit A) and a 55 kDa (PR55) (Subunit B) regulatory subunit.

In terms of biological role, phosphatase 2A affects a variety of biological processes in the cell such as transcription, cell cycle progression and cellular morphogenesis, and provides an initial identification of critical substrates for this phosphatase. The regulatory subunit may direct the catalytic subunit to distinct, albeit overlapping, subsets of substrates. This chain is Protein phosphatase PP2A regulatory subunit B (CDC55), found in Candida tropicalis (Yeast).